Reading from the N-terminus, the 350-residue chain is tRNA-splicing endonuclease (350 aa).

Residues tyrosine 286, histidine 297, and lysine 328 contribute to the active site.

It belongs to the tRNA-intron endonuclease family. Archaeal long subfamily. As to quaternary structure, homodimer.

The enzyme catalyses pretRNA = a 3'-half-tRNA molecule with a 5'-OH end + a 5'-half-tRNA molecule with a 2',3'-cyclic phosphate end + an intron with a 2',3'-cyclic phosphate and a 5'-hydroxyl terminus.. Functionally, endonuclease that removes tRNA introns. Cleaves pre-tRNA at the 5'- and 3'-splice sites to release the intron. The products are an intron and two tRNA half-molecules bearing 2',3' cyclic phosphate and 5'-OH termini. Recognizes a pseudosymmetric substrate in which 2 bulged loops of 3 bases are separated by a stem of 4 bp. The chain is tRNA-splicing endonuclease from Methanosarcina acetivorans (strain ATCC 35395 / DSM 2834 / JCM 12185 / C2A).